The chain runs to 202 residues: Peptidyl-tRNA hydrolase (202 aa).

Y22 lines the tRNA pocket. Catalysis depends on H27, which acts as the Proton acceptor. TRNA contacts are provided by F69, N71, and N117.

Belongs to the PTH family. As to quaternary structure, monomer.

The protein localises to the cytoplasm. The catalysed reaction is an N-acyl-L-alpha-aminoacyl-tRNA + H2O = an N-acyl-L-amino acid + a tRNA + H(+). Hydrolyzes ribosome-free peptidyl-tRNAs (with 1 or more amino acids incorporated), which drop off the ribosome during protein synthesis, or as a result of ribosome stalling. Functionally, catalyzes the release of premature peptidyl moieties from peptidyl-tRNA molecules trapped in stalled 50S ribosomal subunits, and thus maintains levels of free tRNAs and 50S ribosomes. The protein is Peptidyl-tRNA hydrolase of Thiobacillus denitrificans (strain ATCC 25259 / T1).